Reading from the N-terminus, the 292-residue chain is tRNA (guanine-N(7)-)-methyltransferase (292 aa).

The segment at 1–52 (MGKIEATSKEEKLRVQKEAEARRRAYRDLKKEARQMQKEVKFDTDDNSELPK) is disordered. Residues G106, 129-130 (EI), 166-167 (NA), and C186 contribute to the S-adenosyl-L-methionine site. Residue D189 is part of the active site. 264 to 266 (TEE) lines the S-adenosyl-L-methionine pocket.

It belongs to the class I-like SAM-binding methyltransferase superfamily. TrmB family. Forms a complex with TRM82.

It localises to the nucleus. The catalysed reaction is guanosine(46) in tRNA + S-adenosyl-L-methionine = N(7)-methylguanosine(46) in tRNA + S-adenosyl-L-homocysteine. Its pathway is tRNA modification; N(7)-methylguanine-tRNA biosynthesis. Functionally, catalyzes the formation of N(7)-methylguanine at position 46 (m7G46) in tRNA. This Debaryomyces hansenii (strain ATCC 36239 / CBS 767 / BCRC 21394 / JCM 1990 / NBRC 0083 / IGC 2968) (Yeast) protein is tRNA (guanine-N(7)-)-methyltransferase.